A 358-amino-acid chain; its full sequence is D-alanine--D-alanine ligase (358 aa).

The 206-residue stretch at 136-341 (KYILQAAGVP…YGDLIEELIQ (206 aa)) folds into the ATP-grasp domain. Position 169–224 (169–224 (EGSLLYPMFVKPANMGSSVGISKAENREELQNALALAYQYDSRAIVEQGIEAREIE)) interacts with ATP. Residues D295, E308, and N310 each contribute to the Mg(2+) site.

This sequence belongs to the D-alanine--D-alanine ligase family. The cofactor is Mg(2+). It depends on Mn(2+) as a cofactor.

It localises to the cytoplasm. It catalyses the reaction 2 D-alanine + ATP = D-alanyl-D-alanine + ADP + phosphate + H(+). The protein operates within cell wall biogenesis; peptidoglycan biosynthesis. In terms of biological role, cell wall formation. This chain is D-alanine--D-alanine ligase, found in Enterococcus hirae (strain ATCC 9790 / DSM 20160 / JCM 8729 / LMG 6399 / NBRC 3181 / NCIMB 6459 / NCDO 1258 / NCTC 12367 / WDCM 00089 / R).